Here is a 451-residue protein sequence, read N- to C-terminus: Exodeoxyribonuclease 7 large subunit (451 aa).

This sequence belongs to the XseA family. In terms of assembly, heterooligomer composed of large and small subunits.

Its subcellular location is the cytoplasm. It catalyses the reaction Exonucleolytic cleavage in either 5'- to 3'- or 3'- to 5'-direction to yield nucleoside 5'-phosphates.. Its function is as follows. Bidirectionally degrades single-stranded DNA into large acid-insoluble oligonucleotides, which are then degraded further into small acid-soluble oligonucleotides. This is Exodeoxyribonuclease 7 large subunit from Neisseria gonorrhoeae (strain ATCC 700825 / FA 1090).